The following is a 525-amino-acid chain: GMP synthase [glutamine-hydrolyzing] (525 aa).

The Glutamine amidotransferase type-1 domain occupies 9–207 (RILILDFGSQ…VRDICQCEAL (199 aa)). Catalysis depends on cysteine 86, which acts as the Nucleophile. Active-site residues include histidine 181 and glutamate 183. The GMPS ATP-PPase domain maps to 208–400 (WTPAKIIDDA…LGLPYDMLYR (193 aa)). Position 235–241 (235–241 (SGGVDSS)) interacts with ATP.

In terms of assembly, homodimer.

It carries out the reaction XMP + L-glutamine + ATP + H2O = GMP + L-glutamate + AMP + diphosphate + 2 H(+). The protein operates within purine metabolism; GMP biosynthesis; GMP from XMP (L-Gln route): step 1/1. Its function is as follows. Catalyzes the synthesis of GMP from XMP. In Salmonella arizonae (strain ATCC BAA-731 / CDC346-86 / RSK2980), this protein is GMP synthase [glutamine-hydrolyzing].